Here is a 662-residue protein sequence, read N- to C-terminus: Polyadenylate-binding protein 4 (662 aa).

Positions 1–23 (MAQVQAPSSHSPPPPAVVNDGAA) are disordered. 4 RRM domains span residues 46-124 (CSLY…YSSR), 134-211 (GNLF…PFLR), 225-302 (TNVY…KAQK), and 328-405 (LNLY…LAQR). 2 stretches are compositionally biased toward low complexity: residues 480 to 489 (PMMQPGQQGP) and 506 to 518 (QQPM…QMMP). 2 disordered regions span residues 480–518 (PMMQ…QMMP) and 634–662 (NQPS…NDHL). The 78-residue stretch at 558 to 635 (SAGQLATSLA…ALDVLRNVNQ (78 aa)) folds into the PABC domain. A compositionally biased stretch (polar residues) spans 634–649 (NQPSSQGSEGNKSGSP).

Belongs to the polyadenylate-binding protein type-1 family. As to quaternary structure, interacts with ERD15/CID1. Interacts with Turnip mosaic virus (TuMV) VPg-Pro.

The protein localises to the cytoplasm. Its subcellular location is the nucleus. Its function is as follows. Binds the poly(A) tail of mRNA. Appears to be an important mediator of the multiple roles of the poly(A) tail in mRNA biogenesis, stability and translation. During infection with potyvirus TuMV, acts as a potential integral component of the viral replicase complex that could play an important role in the regulation of potyviral RNA-dependent RNA polymerase (RdRp). The polypeptide is Polyadenylate-binding protein 4 (PAB4) (Arabidopsis thaliana (Mouse-ear cress)).